The chain runs to 195 residues: Ribosomal RNA small subunit methyltransferase G (195 aa).

S-adenosyl-L-methionine is bound by residues G60, L65, 114 to 115 (IE), and R128.

The protein belongs to the methyltransferase superfamily. RNA methyltransferase RsmG family.

It localises to the cytoplasm. It carries out the reaction guanosine(527) in 16S rRNA + S-adenosyl-L-methionine = N(7)-methylguanosine(527) in 16S rRNA + S-adenosyl-L-homocysteine. Specifically methylates the N7 position of guanine in position 527 of 16S rRNA. In Dinoroseobacter shibae (strain DSM 16493 / NCIMB 14021 / DFL 12), this protein is Ribosomal RNA small subunit methyltransferase G.